A 60-amino-acid polypeptide reads, in one-letter code: UPF0434 protein ECA2555 (60 aa).

This sequence belongs to the UPF0434 family.

This is UPF0434 protein ECA2555 from Pectobacterium atrosepticum (strain SCRI 1043 / ATCC BAA-672) (Erwinia carotovora subsp. atroseptica).